The following is a 493-amino-acid chain: Glutathione hydrolase 6 (493 aa).

Over 1-54 (MERAEEPVVYQKLLPWEPSLESEEEVEEEETSEALVLNPRRHQDSSRNKAGGLP) the chain is Cytoplasmic. Positions 19–52 (SLESEEEVEEEETSEALVLNPRRHQDSSRNKAGG) are disordered. A compositionally biased stretch (acidic residues) spans 20–32 (LESEEEVEEEETS). Residues 55–75 (GTWARVVAALLLLAVGCSLAV) form a helical; Signal-anchor for type II membrane protein membrane-spanning segment. At 76–493 (RQLQNQGRST…PHACCPFQGF (418 aa)) the chain is on the extracellular side. The tract at residues 83–105 (RSTGSLGSVAPPPGGHSHGPGVY) is disordered. N-linked (GlcNAc...) asparagine glycosylation is found at N161 and N370. The segment covering 442–455 (PPTQAQHQHQGQQE) has biased composition (low complexity). A disordered region spans residues 442–464 (PPTQAQHQHQGQQEPTEHPSTCG).

Belongs to the gamma-glutamyltransferase family. Heterodimer composed of the light and heavy chains. The active site is located in the light chain. In terms of processing, cleaved by autocatalysis into a large and a small subunit and the autocatalytic cleavage is essential to the functional activation of the enzyme.

It is found in the membrane. The enzyme catalyses an N-terminal (5-L-glutamyl)-[peptide] + an alpha-amino acid = 5-L-glutamyl amino acid + an N-terminal L-alpha-aminoacyl-[peptide]. The catalysed reaction is glutathione + H2O = L-cysteinylglycine + L-glutamate. It carries out the reaction an S-substituted glutathione + H2O = an S-substituted L-cysteinylglycine + L-glutamate. The protein operates within sulfur metabolism; glutathione metabolism. Its function is as follows. Hydrolyzes and transfers gamma-glutamyl moieties from glutathione and other gamma-glutamyl compounds to acceptors. This chain is Glutathione hydrolase 6, found in Homo sapiens (Human).